A 360-amino-acid polypeptide reads, in one-letter code: Photosystem II protein D1 (360 aa).

The next 3 membrane-spanning stretches (helical) occupy residues 29–46 (YIGW…TATS), 118–133 (HFFI…EWEL), and 142–156 (WIAV…AATA). Residue H118 coordinates chlorophyll a. Y126 lines the pheophytin a pocket. [CaMn4O5] cluster-binding residues include D170 and E189. Residues 197–218 (FHMMGVAGVFGGSLFSAMHGSL) traverse the membrane as a helical segment. Residue H198 participates in chlorophyll a binding. Residues H215 and 264–265 (SF) contribute to the a quinone site. H215 is a binding site for Fe cation. H272 provides a ligand contact to Fe cation. Residues 274-288 (FLALWPVVCICVTAL) form a helical membrane-spanning segment. [CaMn4O5] cluster-binding residues include H332, E333, D342, and A344. The propeptide occupies 345–360 (SEVSLPVALNKVEING).

Belongs to the reaction center PufL/M/PsbA/D family. PSII is composed of 1 copy each of membrane proteins PsbA, PsbB, PsbC, PsbD, PsbE, PsbF, PsbH, PsbI, PsbJ, PsbK, PsbL, PsbM, PsbT, PsbY, PsbZ, Psb30/Ycf12, at least 3 peripheral proteins of the oxygen-evolving complex and a large number of cofactors. It forms dimeric complexes. The D1/D2 heterodimer binds P680, chlorophylls that are the primary electron donor of PSII, and subsequent electron acceptors. It shares a non-heme iron and each subunit binds pheophytin, quinone, additional chlorophylls, carotenoids and lipids. D1 provides most of the ligands for the Mn4-Ca-O5 cluster of the oxygen-evolving complex (OEC). There is also a Cl(-1) ion associated with D1 and D2, which is required for oxygen evolution. The PSII complex binds additional chlorophylls, carotenoids and specific lipids. serves as cofactor. Post-translationally, tyr-161 forms a radical intermediate that is referred to as redox-active TyrZ, YZ or Y-Z. In terms of processing, C-terminally processed by CTPA; processing is essential to allow assembly of the oxygen-evolving complex and thus photosynthetic growth.

The protein localises to the plastid. The protein resides in the chloroplast thylakoid membrane. It carries out the reaction 2 a plastoquinone + 4 hnu + 2 H2O = 2 a plastoquinol + O2. Its function is as follows. Photosystem II (PSII) is a light-driven water:plastoquinone oxidoreductase that uses light energy to abstract electrons from H(2)O, generating O(2) and a proton gradient subsequently used for ATP formation. It consists of a core antenna complex that captures photons, and an electron transfer chain that converts photonic excitation into a charge separation. The D1/D2 (PsbA/PsbD) reaction center heterodimer binds P680, the primary electron donor of PSII as well as several subsequent electron acceptors. In Galdieria sulphuraria (Red alga), this protein is Photosystem II protein D1.